We begin with the raw amino-acid sequence, 296 residues long: Protoheme IX farnesyltransferase (296 aa).

Topologically, residues 1 to 9 are cytoplasmic; the sequence is MMFKQYLQV. Residues 10–28 traverse the membrane as a helical segment; the sequence is TKPGIIFGNLISVIGGFLL. Topologically, residues 29–37 are periplasmic; it reads ASKGSIDYP. Residues 38–56 traverse the membrane as a helical segment; sequence LFIYTLVGVSLVVASGCVF. Residues 57 to 78 lie on the Cytoplasmic side of the membrane; it reads NNFIDRDIDRKMERTKNRVLVK. Residues 79 to 97 form a helical membrane-spanning segment; the sequence is GLISPGVSLVYATLLGIAG. Residues 98–107 are Periplasmic-facing; the sequence is FMLLWFGANP. A helical membrane pass occupies residues 108–126; that stretch reads LACWLGVMGFVVYVGIYSL. Residues 127-197 are Cytoplasmic-facing; it reads YMKRHSVYGT…YQAANIPVLP (71 aa). Residues 198–216 form a helical membrane-spanning segment; the sequence is VVKGISVAKNHITLYIIAF. Over 217-228 the chain is Periplasmic; the sequence is AVATLMLTLGGY. Residues 229–247 form a helical membrane-spanning segment; sequence AGYKYLVVAAAVSVWWLGM. The Cytoplasmic portion of the chain corresponds to 248–268; it reads ALRGYKVEDDKVWARKLFGFS. A helical transmembrane segment spans residues 269–287; sequence IIAITALSIMMSVDFMVPN. The Periplasmic portion of the chain corresponds to 288-296; the sequence is SQSLLTYVW.

It belongs to the UbiA prenyltransferase family. Protoheme IX farnesyltransferase subfamily.

Its subcellular location is the cell inner membrane. It catalyses the reaction heme b + (2E,6E)-farnesyl diphosphate + H2O = Fe(II)-heme o + diphosphate. Its pathway is porphyrin-containing compound metabolism; heme O biosynthesis; heme O from protoheme: step 1/1. Converts heme B (protoheme IX) to heme O by substitution of the vinyl group on carbon 2 of heme B porphyrin ring with a hydroxyethyl farnesyl side group. The polypeptide is Protoheme IX farnesyltransferase (Salmonella arizonae (strain ATCC BAA-731 / CDC346-86 / RSK2980)).